The following is a 547-amino-acid chain: (R)-citramalate synthase (547 aa).

A Pyruvate carboxyltransferase domain is found at 8–278 (LWLYDTTLRD…YDCIEPEKLA (271 aa)).

The protein belongs to the alpha-IPM synthase/homocitrate synthase family.

The catalysed reaction is pyruvate + acetyl-CoA + H2O = (3R)-citramalate + CoA + H(+). The protein operates within amino-acid biosynthesis; L-isoleucine biosynthesis; 2-oxobutanoate from pyruvate: step 1/3. Its function is as follows. Catalyzes the condensation of pyruvate and acetyl-coenzyme A to form (R)-citramalate. This Synechocystis sp. (strain ATCC 27184 / PCC 6803 / Kazusa) protein is (R)-citramalate synthase.